A 127-amino-acid polypeptide reads, in one-letter code: Large ribosomal subunit protein bL20 (127 aa).

The protein belongs to the bacterial ribosomal protein bL20 family.

Its function is as follows. Binds directly to 23S ribosomal RNA and is necessary for the in vitro assembly process of the 50S ribosomal subunit. It is not involved in the protein synthesizing functions of that subunit. In Corynebacterium diphtheriae (strain ATCC 700971 / NCTC 13129 / Biotype gravis), this protein is Large ribosomal subunit protein bL20.